The primary structure comprises 88 residues: Putative defensin-like protein 228 (88 aa).

The signal sequence occupies residues 1–27 (MMKSAILLMVSCVFMFLVVSYIQDVEG). Intrachain disulfides connect Cys-32/Cys-88, Cys-42/Cys-66, Cys-50/Cys-82, and Cys-64/Cys-84.

It belongs to the DEFL family.

It localises to the secreted. This is Putative defensin-like protein 228 (SCRL3) from Arabidopsis thaliana (Mouse-ear cress).